The chain runs to 141 residues: Hemoglobin subunit alpha-2 (141 aa).

S1 is modified (N-acetylserine). In terms of domain architecture, Globin spans 1-141 (SLSTKDKETV…LARALSEKYR (141 aa)). H59 provides a ligand contact to O2. H88 lines the heme b pocket.

The protein belongs to the globin family. In terms of assembly, hb2 is a heterotetramer of two alpha-2 chains and two beta chains. Red blood cells.

In terms of biological role, involved in oxygen transport from gills to the various peripheral tissues. The chain is Hemoglobin subunit alpha-2 (hba2) from Notothenia angustata (Rockcod).